We begin with the raw amino-acid sequence, 435 residues long: ATP-dependent Clp protease ATP-binding subunit ClpX 3 (435 aa).

Residues 1 to 53 (MSSDPPAKTQHCSFCGIEQGRDTPLIAGIEGQICEACVRLAEQVVANWGRKRS) form the ClpX-type ZB domain. Zn(2+) contacts are provided by cysteine 12, cysteine 15, cysteine 34, and cysteine 37. 125–132 (PTGTGKTL) serves as a coordination point for ATP.

This sequence belongs to the ClpX chaperone family. In terms of assembly, component of the ClpX-ClpP complex. Forms a hexameric ring that, in the presence of ATP, binds to fourteen ClpP subunits assembled into a disk-like structure with a central cavity, resembling the structure of eukaryotic proteasomes.

Functionally, ATP-dependent specificity component of the Clp protease. It directs the protease to specific substrates. Can perform chaperone functions in the absence of ClpP. In Methylococcus capsulatus (strain ATCC 33009 / NCIMB 11132 / Bath), this protein is ATP-dependent Clp protease ATP-binding subunit ClpX 3.